The chain runs to 136 residues: Histone H3.1/H3.2 (136 aa).

The tract at residues 1–42 (MARTKQTARKSTGGKAPRKQLASKAARKAAPATGGVKKPHRY) is disordered. N6,N6,N6-trimethyllysine; alternate is present on Lys5. Position 5 is an N6,N6-dimethyllysine; alternate (Lys5). An N6-methyllysine; alternate mark is found at Lys5 and Lys10. At Lys10 the chain carries N6-acetyllysine; alternate. Position 11 is a phosphoserine (Ser11). Lys15 is subject to N6,N6-dimethyllysine; alternate. N6-acetyllysine; alternate is present on residues Lys15, Lys19, Lys24, Lys28, and Lys37. An N6-methyllysine; alternate mark is found at Lys19, Lys24, Lys28, and Lys37. Positions 19–32 (KQLASKAARKAAPA) are enriched in low complexity. 2 positions are modified to N6,N6,N6-trimethyllysine; alternate: Lys28 and Lys37. Lys28 and Lys37 each carry N6,N6-dimethyllysine; alternate. N6-acetyllysine occurs at positions 57 and 65. Lys80 is subject to N6,N6,N6-trimethyllysine; alternate. The residue at position 80 (Lys80) is an N6,N6-dimethyllysine; alternate. Lys80 is subject to N6-methyllysine; alternate.

This sequence belongs to the histone H3 family. The nucleosome is a histone octamer containing two molecules each of H2A, H2B, H3 and H4 assembled in one H3-H4 heterotetramer and two H2A-H2B heterodimers. The octamer wraps approximately 147 bp of DNA. Post-translationally, phosphorylated by ark1 to form H3S10ph in a cell cycle-dependent manner during mitosis and meiosis. H3S10ph is also formed by ssp2, promotes subsequent H3K14ac formation by gcn5, and is required for transcriptional activation through TBP recruitment to the promoters. Dephosphorylation is performed by sds21. In terms of processing, mono-, di- and trimethylated by the COMPASS complex to form H3K4me1/2/3. H3K4me activates gene expression by regulating transcription elongation and plays a role in telomere length maintenance. H3K4me enrichment correlates with transcription levels, and occurs in a 5' to 3' gradient with H3K4me3 enrichment at the 5'-end of genes, shifting to H3K4me2 and then H3K4me1. Methylated by clr4 to form H3K9me1. H3K9me1 represents a specific tag for epigenetic transcriptional repression by recruiting swi6/HP1 to methylated histones. Targeting to histone probably involves clr3 and rik1. Essential for silencing of centromeres and directional switching of the mating type. Methylated by set2 to form H3K36me. H3K36me represses gene expression. Methylated by dot1 to form H3K79me. H3K79me is required for association of SIR proteins with telomeric regions and for telomeric silencing. The COMPASS-mediated formation of H3K4me2/3 and the dot1-mediated formation of H3K79me require H2BK123ub1. Acetylation of histone H3 leads to transcriptional activation. H3K14ac formation by gcn5 is promoted by H3S10ph. H3K14ac can also be formed by esa1. H3K56ac formation occurs predominantly in newly synthesized H3 molecules during G1, S and G2/M of the cell cycle and may be involved in DNA repair.

It is found in the nucleus. Its subcellular location is the chromosome. Functionally, core component of nucleosome. Nucleosomes wrap and compact DNA into chromatin, limiting DNA accessibility to the cellular machineries which require DNA as a template. Histones thereby play a central role in transcription regulation, DNA repair, DNA replication and chromosomal stability. DNA accessibility is regulated via a complex set of post-translational modifications of histones, also called histone code, and nucleosome remodeling. The chain is Histone H3.1/H3.2 (hht1) from Schizosaccharomyces pombe (strain 972 / ATCC 24843) (Fission yeast).